A 153-amino-acid chain; its full sequence is L-alanine exporter AlaE (153 aa).

Helical transmembrane passes span 16–36 (VAMV…LSEM), 42–62 (LSSR…YGLY), 86–106 (LFAY…AIGA), and 114–134 (AVGS…YFLE).

It belongs to the AlaE exporter family.

It is found in the cell inner membrane. Functionally, exports L-alanine. This is L-alanine exporter AlaE from Musicola paradisiaca (strain Ech703) (Dickeya paradisiaca).